The chain runs to 312 residues: MKALWAVLLATLLTGCLAEGEPEVTDQLSWQSNQPWEQALNRFWDYLRWVQTLSDQVQEELQNSQVTQELTVLMEDTMTEVKAYKKELEEQLGPVAEETRARLAKEVQAAQARLGADMEDLRNRLGQYRNEVHTMLGQNTEELRSRLSTHLRKMRKRLMRDAEDLQKRLAVYKAGAREGAERGVSAIRERLGPLVEQGRQRTANLGAGAAQPLRDRAQALSERLRGRLEEVGNQARDRLEEMREHMEEVRSKMEEQTQQIRLQAEIFQARLKSWFEPLVEDMHRQLANLVEKIQSSVATNSVLSTSVPQENQ.

Positions 1–18 are cleaved as a signal peptide; it reads MKALWAVLLATLLTGCLA. 8 tandem repeats follow at residues 72-93, 94-115, 116-137, 138-159, 160-181, 182-203, 204-225, and 226-247. The interval 72 to 247 is 8 X 22 AA approximate tandem repeats; that stretch reads VLMEDTMTEV…RLEEMREHME (176 aa). Residue Met-135 is modified to Methionine sulfoxide. The segment at 150-160 is LDL and other lipoprotein receptors binding; it reads HLRKMRKRLMR. The interval 150–160 is LDL receptor binding; it reads HLRKMRKRLMR. 154 to 157 serves as a coordination point for heparin; sequence MRKR. The segment at 202 to 282 is lipid-binding and lipoprotein association; the sequence is TANLGAGAAQ…SWFEPLVEDM (81 aa). A heparin-binding site is contributed by 221–228; that stretch reads SERLRGRL. Residues 258–312 form a homooligomerization region; the sequence is QQIRLQAEIFQARLKSWFEPLVEDMHRQLANLVEKIQSSVATNSVLSTSVPQENQ. Residues 270-282 are specificity for association with VLDL; sequence RLKSWFEPLVEDM.

The protein belongs to the apolipoprotein A1/A4/E family. Homotetramer. May interact with ABCA1; functionally associated with ABCA1 in the biogenesis of HDLs. May interact with APP/A4 amyloid-beta peptide; the interaction is extremely stable in vitro but its physiological significance is unclear. May interact with MAPT. May interact with MAP2. In the cerebrospinal fluid, interacts with secreted SORL1. Interacts with PMEL; this allows the loading of PMEL luminal fragment on ILVs to induce fibril nucleation. APOE exists as multiple glycosylated and sialylated glycoforms within cells and in plasma. The extent of glycosylation and sialylation are tissue and context specific. In terms of processing, glycated in plasma VLDL. Post-translationally, phosphorylated by FAM20C in the extracellular medium.

It localises to the secreted. Its subcellular location is the extracellular space. The protein localises to the extracellular matrix. It is found in the extracellular vesicle. The protein resides in the endosome. It localises to the multivesicular body. Its function is as follows. APOE is an apolipoprotein, a protein associating with lipid particles, that mainly functions in lipoprotein-mediated lipid transport between organs via the plasma and interstitial fluids. APOE is a core component of plasma lipoproteins and is involved in their production, conversion and clearance. Apolipoproteins are amphipathic molecules that interact both with lipids of the lipoprotein particle core and the aqueous environment of the plasma. As such, APOE associates with chylomicrons, chylomicron remnants, very low density lipoproteins (VLDL) and intermediate density lipoproteins (IDL) but shows a preferential binding to high-density lipoproteins (HDL). It also binds a wide range of cellular receptors including the LDL receptor/LDLR, the LDL receptor-related proteins LRP1, LRP2 and LRP8 and the very low-density lipoprotein receptor/VLDLR that mediate the cellular uptake of the APOE-containing lipoprotein particles. Finally, APOE also has a heparin-binding activity and binds heparan-sulfate proteoglycans on the surface of cells, a property that supports the capture and the receptor-mediated uptake of APOE-containing lipoproteins by cells. A main function of APOE is to mediate lipoprotein clearance through the uptake of chylomicrons, VLDLs, and HDLs by hepatocytes. APOE is also involved in the biosynthesis by the liver of VLDLs as well as their uptake by peripheral tissues ensuring the delivery of triglycerides and energy storage in muscle, heart and adipose tissues. By participating in the lipoprotein-mediated distribution of lipids among tissues, APOE plays a critical role in plasma and tissues lipid homeostasis. APOE is also involved in two steps of reverse cholesterol transport, the HDLs-mediated transport of cholesterol from peripheral tissues to the liver, and thereby plays an important role in cholesterol homeostasis. First, it is functionally associated with ABCA1 in the biogenesis of HDLs in tissues. Second, it is enriched in circulating HDLs and mediates their uptake by hepatocytes. APOE also plays an important role in lipid transport in the central nervous system, regulating neuron survival and sprouting. This Arvicanthis niloticus (African grass rat) protein is Apolipoprotein E (Apoe).